Consider the following 443-residue polypeptide: Transcriptional regulatory protein ZraR (443 aa).

The 115-residue stretch at 7–121 (DILVVDDDIS…KLQLTLSEAL (115 aa)) folds into the Response regulatory domain. 4-aspartylphosphate is present on Asp56. Residues 141 to 370 (MVGDSPAMRA…LENAVERAVV (230 aa)) form the Sigma-54 factor interaction domain. Gly172, Thr173, Arg329, and Arg359 together coordinate ATP. The H-T-H motif DNA-binding region spans 423 to 442 (KTEAARRLGITRKTLLAKLS).

Post-translationally, phosphorylated by ZraS.

The protein localises to the cytoplasm. Activity of the ZraS/ZraR two-component system is repressed by the zinc-bound form of ZraP, which probably interacts with the periplasmic region of ZraS. In terms of biological role, part of the Zra signaling pathway, an envelope stress response (ESR) system composed of the periplasmic accessory protein ZraP, the histidine kinase ZraS and the transcriptional regulator ZraR. The ZraPSR system contributes to antibiotic resistance and is important for membrane integrity in the presence of membrane-targeting biocides. ZraR is a member of the two-component regulatory system ZraS/ZraR. When activated by ZraS, acts in conjunction with sigma-54 to regulate the expression of zraP in the presence of high Zn(2+) or Pb(2+) concentrations. Also positively autoregulates the expression of the zraSR operon. This is Transcriptional regulatory protein ZraR (zraR) from Klebsiella oxytoca.